The following is a 238-amino-acid chain: Sugar fermentation stimulation protein homolog (238 aa).

This sequence belongs to the SfsA family.

The sequence is that of Sugar fermentation stimulation protein homolog from Histophilus somni (strain 129Pt) (Haemophilus somnus).